We begin with the raw amino-acid sequence, 345 residues long: Anthranilate phosphoribosyltransferase (345 aa).

5-phospho-alpha-D-ribose 1-diphosphate is bound by residues G88, 91–92 (GD), T96, 98–101 (NIST), 116–124 (KHGNRSASG), and S128. G88 provides a ligand contact to anthranilate. S100 is a binding site for Mg(2+). N119 is a binding site for anthranilate. An anthranilate-binding site is contributed by R174. The Mg(2+) site is built by D233 and E234.

The protein belongs to the anthranilate phosphoribosyltransferase family. As to quaternary structure, homodimer. It depends on Mg(2+) as a cofactor.

It catalyses the reaction N-(5-phospho-beta-D-ribosyl)anthranilate + diphosphate = 5-phospho-alpha-D-ribose 1-diphosphate + anthranilate. It participates in amino-acid biosynthesis; L-tryptophan biosynthesis; L-tryptophan from chorismate: step 2/5. Its function is as follows. Catalyzes the transfer of the phosphoribosyl group of 5-phosphorylribose-1-pyrophosphate (PRPP) to anthranilate to yield N-(5'-phosphoribosyl)-anthranilate (PRA). The protein is Anthranilate phosphoribosyltransferase of Prochlorococcus marinus (strain NATL1A).